The primary structure comprises 282 residues: Parvulin-like PPIase (282 aa).

The first 20 residues, 1–20 (MKKLSVIFLSVSMLSGIAFA), serve as a signal peptide directing secretion. In terms of domain architecture, PpiC spans 138–231 (KEQIKVAHIL…FGWHIIKVLE (94 aa)).

This sequence belongs to the PpiC/parvulin rotamase family.

It localises to the cell outer membrane. The catalysed reaction is [protein]-peptidylproline (omega=180) = [protein]-peptidylproline (omega=0). The protein is Parvulin-like PPIase (plp) of Rickettsia conorii (strain ATCC VR-613 / Malish 7).